The following is a 38-amino-acid chain: MPTIQQLIRNARQPIENRKKSPALRGCPQRRGVCARVY.

A disordered region spans residues 1 to 26; the sequence is MPTIQQLIRNARQPIENRKKSPALRG.

This sequence belongs to the universal ribosomal protein uS12 family. Part of the 30S ribosomal subunit.

The protein localises to the plastid. It localises to the chloroplast. Functionally, with S4 and S5 plays an important role in translational accuracy. Located at the interface of the 30S and 50S subunits. This is Small ribosomal subunit protein uS12c (rps12) from Pinus contorta (Shore pine).